The following is a 754-amino-acid chain: Endoribonuclease Dicer-like (754 aa).

The PAZ domain maps to 132–251 (QLMCDAKRLS…LPPELCLLLP (120 aa)). 2 RNase III domains span residues 298 to 418 (FAIT…TGPN) and 613 to 734 (AQTV…LACG). Glu336, Asp404, Glu407, Glu649, Asp720, and Glu723 together coordinate Mn(2+).

Homodimer. Mg(2+) serves as cofactor. Mn(2+) is required as a cofactor.

Functionally, involved in cleaving double-stranded RNA in the RNA interference (RNAi) pathway. It produces 21 to 23 bp dsRNAs (siRNAs) which target the selective destruction of homologous RNAs. This Giardia intestinalis (strain ATCC 50803 / WB clone C6) (Giardia lamblia) protein is Endoribonuclease Dicer-like.